The primary structure comprises 256 residues: 5'-nucleotidase SurE (256 aa).

Residues Asp8, Asp9, Ser42, and Asn94 each contribute to the a divalent metal cation site.

Belongs to the SurE nucleotidase family. It depends on a divalent metal cation as a cofactor.

It is found in the cytoplasm. The catalysed reaction is a ribonucleoside 5'-phosphate + H2O = a ribonucleoside + phosphate. Nucleotidase that shows phosphatase activity on nucleoside 5'-monophosphates. This Ehrlichia chaffeensis (strain ATCC CRL-10679 / Arkansas) protein is 5'-nucleotidase SurE.